Consider the following 109-residue polypeptide: Transmembrane protein 233 (109 aa).

The disordered stretch occupies residues 1-30 (MSQYAPSPDFKRALDSSPEANTEDDKTEED). Over 1–41 (MSQYAPSPDFKRALDSSPEANTEDDKTEEDVPMPKNYLWLT) the chain is Cytoplasmic. Positions 21–30 (NTEDDKTEED) are enriched in acidic residues. The helical intramembrane region spans 42 to 62 (IVSCFCPAYPINIVALVFSIM). At 63–84 (SLNSYNDGDYEGARRLGRNAKW) the chain is on the cytoplasmic side. The helical transmembrane segment at 85-105 (VAIASIIIGLLIIGISCAVHF) threads the bilayer. The Extracellular portion of the chain corresponds to 106 to 109 (TRNA).

The protein belongs to the CD225/Dispanin family. As to quaternary structure, interacts with the giant stinging tree toxin ExTxA (AC P0DQP3). Interacts with Nav1.7/SCN9A. Interacts with Nav1.1/SCN1A, Nav1.2/SCN2A, Nav1.3/SCN3A, Nav1.4/SCN4A, Nav1.5/SCN5A, and Nav1.6/SCN8A.

Its subcellular location is the cell membrane. Functionally, probable accessory protein of voltage-gated sodium channels. This Homo sapiens (Human) protein is Transmembrane protein 233.